The chain runs to 278 residues: Non-homologous end joining protein Ku (278 aa).

In terms of domain architecture, Ku spans 9 to 172 (ISFGLVNIPV…MHFAQELVDV (164 aa)). The tract at residues 255 to 278 (NQTGAGAKKKPAKTAKRGKSRKAA) is disordered. Basic residues predominate over residues 261–278 (AKKKPAKTAKRGKSRKAA).

It belongs to the prokaryotic Ku family. In terms of assembly, homodimer. Interacts with LigD.

Its function is as follows. With LigD forms a non-homologous end joining (NHEJ) DNA repair enzyme, which repairs dsDNA breaks with reduced fidelity. Binds linear dsDNA with 5'- and 3'- overhangs but not closed circular dsDNA nor ssDNA. Recruits and stimulates the ligase activity of LigD. In Opitutus terrae (strain DSM 11246 / JCM 15787 / PB90-1), this protein is Non-homologous end joining protein Ku.